The following is a 230-amino-acid chain: 2,3-bisphosphoglycerate-dependent phosphoglycerate mutase (230 aa).

Residues 10 to 17, 23 to 24, R62, 89 to 92, K100, 116 to 117, and 185 to 186 each bind substrate; these read RHGQSKWN, TG, ERHY, RR, and GN. The active-site Tele-phosphohistidine intermediate is H11. E89 serves as the catalytic Proton donor/acceptor.

Belongs to the phosphoglycerate mutase family. BPG-dependent PGAM subfamily. In terms of assembly, homodimer.

The enzyme catalyses (2R)-2-phosphoglycerate = (2R)-3-phosphoglycerate. It participates in carbohydrate degradation; glycolysis; pyruvate from D-glyceraldehyde 3-phosphate: step 3/5. Functionally, catalyzes the interconversion of 2-phosphoglycerate and 3-phosphoglycerate. The chain is 2,3-bisphosphoglycerate-dependent phosphoglycerate mutase from Buchnera aphidicola subsp. Schizaphis graminum (strain Sg).